The primary structure comprises 429 residues: Ribosomal RNA small subunit methyltransferase B (429 aa).

S-adenosyl-L-methionine contacts are provided by residues 254–260 (CAAPGGK), Asp-277, Asp-303, and Asp-322. Cys-375 acts as the Nucleophile in catalysis.

This sequence belongs to the class I-like SAM-binding methyltransferase superfamily. RsmB/NOP family.

Its subcellular location is the cytoplasm. The catalysed reaction is cytidine(967) in 16S rRNA + S-adenosyl-L-methionine = 5-methylcytidine(967) in 16S rRNA + S-adenosyl-L-homocysteine + H(+). Specifically methylates the cytosine at position 967 (m5C967) of 16S rRNA. The protein is Ribosomal RNA small subunit methyltransferase B of Salmonella arizonae (strain ATCC BAA-731 / CDC346-86 / RSK2980).